The chain runs to 373 residues: Potential protein lysine methyltransferase SET6 (373 aa).

Residues 12-338 (PFFQVRQTKW…KDEQICIDYS (327 aa)) form the SET domain.

It belongs to the class V-like SAM-binding methyltransferase superfamily.

Involved in resistance to compounds that target ergosterol biosynthesis, including fenpropimorph, dyclonine, and alverine citrate. Since a deletion in the absence of these compounds does not have an effect on growth, is more likely to be involved in compound availability. The chain is Potential protein lysine methyltransferase SET6 (SET6) from Saccharomyces cerevisiae (strain ATCC 204508 / S288c) (Baker's yeast).